The following is a 541-amino-acid chain: Cytochrome bc1 complex cytochrome b subunit (541 aa).

A helical membrane pass occupies residues 36 to 56 (FLLGEIALYSFIILILTGVYL). Residues His105 and His119 each coordinate heme. A run of 3 helical transmembrane segments spans residues 109–129 (ALMF…TGAF), 137–157 (WVIG…GYSL), and 169–189 (IMSA…WMIF). Positions 206 and 221 each coordinate heme. 5 consecutive transmembrane segments (helical) span residues 207–227 (VLII…LVWY), 256–276 (SVAF…VTTI), 325–345 (VFWV…YPWI), 371–391 (LGVM…NDIW), and 408–428 (IGLI…CIGL).

The protein belongs to the cytochrome b family. In terms of assembly, the cytochrome bc1 complex is composed of a cytochrome b (QcrB), the Rieske protein iron-sulfur (QcrA) and a diheme cytochrome c (QcrC) subunit. It depends on heme as a cofactor.

It localises to the cell membrane. The catalysed reaction is a quinol + 2 Fe(III)-[cytochrome c](out) = a quinone + 2 Fe(II)-[cytochrome c](out) + 2 H(+)(out). In terms of biological role, cytochrome b subunit of the cytochrome bc1 complex, an essential component of the respiratory electron transport chain required for ATP synthesis. The bc1 complex catalyzes the oxidation of menaquinol and the reduction of cytochrome c in the respiratory chain. The bc1 complex operates through a Q-cycle mechanism that couples electron transfer to generation of the proton gradient that drives ATP synthesis. The protein is Cytochrome bc1 complex cytochrome b subunit (qcrB) of Corynebacterium efficiens (strain DSM 44549 / YS-314 / AJ 12310 / JCM 11189 / NBRC 100395).